We begin with the raw amino-acid sequence, 149 residues long: Succinate dehydrogenase assembly factor 2, mitochondrial (149 aa).

Belongs to the SDHAF2 family. As to quaternary structure, interacts with the flavoprotein subunit within the SDH catalytic dimer.

It localises to the mitochondrion matrix. Its function is as follows. Plays an essential role in the assembly of succinate dehydrogenase (SDH), an enzyme complex (also referred to as respiratory complex II) that is a component of both the tricarboxylic acid (TCA) cycle and the mitochondrial electron transport chain, and which couples the oxidation of succinate to fumarate with the reduction of ubiquinone (coenzyme Q) to ubiquinol. Required for flavinylation (covalent attachment of FAD) of the flavoprotein subunit of the SDH catalytic dimer. This chain is Succinate dehydrogenase assembly factor 2, mitochondrial, found in Scheffersomyces stipitis (strain ATCC 58785 / CBS 6054 / NBRC 10063 / NRRL Y-11545) (Yeast).